The primary structure comprises 141 residues: Endoribonuclease YbeY (141 aa).

Residues His-105, His-109, and Asp-115 each contribute to the Zn(2+) site.

Belongs to the endoribonuclease YbeY family. Zn(2+) is required as a cofactor.

Its subcellular location is the cytoplasm. In terms of biological role, single strand-specific metallo-endoribonuclease involved in late-stage 70S ribosome quality control and in maturation of the 3' terminus of the 16S rRNA. The polypeptide is Endoribonuclease YbeY (Chloroherpeton thalassium (strain ATCC 35110 / GB-78)).